Reading from the N-terminus, the 461-residue chain is Chromosomal replication initiator protein DnaA (461 aa).

A domain I, interacts with DnaA modulators region spans residues 1-68; the sequence is MINAWAQIEH…EKAAASVLGS (68 aa). Residues 68-118 form a domain II region; the sequence is SVPTITVVSGEEPAAAPRPVQVPAQKRPAAARTSGAEQMGLPLHYASRSAD. Residues 119–336 are domain III, AAA+ region; the sequence is SIKWMHSFDE…SCLRNLLLKA (218 aa). ATP-binding residues include Gly162, Gly164, Lys165, and Thr166. The interval 337–461 is domain IV, binds dsDNA; it reads RLLNQQITMD…VERNGRIIHP (125 aa).

The protein belongs to the DnaA family. In terms of assembly, oligomerizes as a right-handed, spiral filament on DNA at oriC.

The protein resides in the cytoplasm. Its function is as follows. Plays an essential role in the initiation and regulation of chromosomal replication. ATP-DnaA binds to the origin of replication (oriC) to initiate formation of the DNA replication initiation complex once per cell cycle. Binds the DnaA box (a 9 base pair repeat at the origin) and separates the double-stranded (ds)DNA. Forms a right-handed helical filament on oriC DNA; dsDNA binds to the exterior of the filament while single-stranded (ss)DNA is stabiized in the filament's interior. The ATP-DnaA-oriC complex binds and stabilizes one strand of the AT-rich DNA unwinding element (DUE), permitting loading of DNA polymerase. After initiation quickly degrades to an ADP-DnaA complex that is not apt for DNA replication. Binds acidic phospholipids. The sequence is that of Chromosomal replication initiator protein DnaA from Oleidesulfovibrio alaskensis (strain ATCC BAA-1058 / DSM 17464 / G20) (Desulfovibrio alaskensis).